The primary structure comprises 125 residues: Succinate dehydrogenase assembly factor 3, mitochondrial (125 aa).

The N-terminal 30 residues, 1-30 (MPGRHVSRVRALYKRVLQLHRVLPPDLKSL), are a transit peptide targeting the mitochondrion.

The protein belongs to the complex I LYR family. SDHAF3 subfamily. As to quaternary structure, interacts with SDHB within an SDHA-SDHB subcomplex.

It localises to the mitochondrion matrix. Functionally, plays an essential role in the assembly of succinate dehydrogenase (SDH), an enzyme complex (also referred to as respiratory complex II) that is a component of both the tricarboxylic acid (TCA) cycle and the mitochondrial electron transport chain, and which couples the oxidation of succinate to fumarate with the reduction of ubiquinone (coenzyme Q) to ubiquinol. Promotes maturation of the iron-sulfur protein subunit SDHB of the SDH catalytic dimer, protecting it from the deleterious effects of oxidants. May act together with SDHAF1. This is Succinate dehydrogenase assembly factor 3, mitochondrial from Homo sapiens (Human).